The following is a 193-amino-acid chain: Rho-related protein racF2 (193 aa).

Residue 10–17 (GDGAVGKT) participates in GTP binding. The short motif at 32-40 (YLPTVFDNY) is the Effector region element. GTP-binding positions include 57 to 61 (DTAGQ) and 115 to 118 (TKQD). At C190 the chain carries Cysteine methyl ester. The S-geranylgeranyl cysteine moiety is linked to residue C190. The propeptide at 191–193 (TIM) is removed in mature form.

This sequence belongs to the small GTPase superfamily. Rho family.

The protein resides in the cell membrane. The chain is Rho-related protein racF2 (racF2) from Dictyostelium discoideum (Social amoeba).